Here is a 463-residue protein sequence, read N- to C-terminus: Argininosuccinate lyase (463 aa).

The 2-(N(omega)-L-arginino)succinate site is built by Ser-27, Asn-115, and Thr-161. Catalysis depends on His-162, which acts as the Proton acceptor. Residue Ser-283 is the Proton donor of the active site. 2-(N(omega)-L-arginino)succinate-binding residues include Asn-291, Tyr-323, Gln-328, and Lys-331.

It belongs to the lyase 1 family. Argininosuccinate lyase subfamily. In terms of assembly, homotetramer.

It catalyses the reaction 2-(N(omega)-L-arginino)succinate = fumarate + L-arginine. Its pathway is amino-acid biosynthesis; L-arginine biosynthesis; L-arginine from L-ornithine and carbamoyl phosphate: step 3/3. The chain is Argininosuccinate lyase (ARG4) from Saccharomyces paradoxus (Yeast).